A 123-amino-acid polypeptide reads, in one-letter code: Small ribosomal subunit protein uS12 (123 aa).

The disordered stretch occupies residues 1–25 (MPTINQLIRKRRKSSLARKKSPALQ). Over residues 8-21 (IRKRRKSSLARKKS) the composition is skewed to basic residues. Residue Asp89 is modified to 3-methylthioaspartic acid.

Belongs to the universal ribosomal protein uS12 family. In terms of assembly, part of the 30S ribosomal subunit. Contacts proteins S8 and S17. May interact with IF1 in the 30S initiation complex.

In terms of biological role, with S4 and S5 plays an important role in translational accuracy. Its function is as follows. Interacts with and stabilizes bases of the 16S rRNA that are involved in tRNA selection in the A site and with the mRNA backbone. Located at the interface of the 30S and 50S subunits, it traverses the body of the 30S subunit contacting proteins on the other side and probably holding the rRNA structure together. The combined cluster of proteins S8, S12 and S17 appears to hold together the shoulder and platform of the 30S subunit. The protein is Small ribosomal subunit protein uS12 of Chlamydia pneumoniae (Chlamydophila pneumoniae).